Reading from the N-terminus, the 301-residue chain is Pseudouridine-5'-phosphate glycosidase (301 aa).

Glu25 acts as the Proton donor in catalysis. Residues Lys86 and Val106 each contribute to the substrate site. Asp138 is a binding site for Mn(2+). Substrate is bound at residue 140–142 (SAD). Lys159 (nucleophile) is an active-site residue.

This sequence belongs to the pseudouridine-5'-phosphate glycosidase family. Homotrimer. It depends on Mn(2+) as a cofactor.

The enzyme catalyses D-ribose 5-phosphate + uracil = psi-UMP + H2O. Functionally, catalyzes the reversible cleavage of pseudouridine 5'-phosphate (PsiMP) to ribose 5-phosphate and uracil. Functions biologically in the cleavage direction, as part of a pseudouridine degradation pathway. In Geobacillus kaustophilus (strain HTA426), this protein is Pseudouridine-5'-phosphate glycosidase.